A 347-amino-acid polypeptide reads, in one-letter code: MSGLLCYCRQGFEPELAAELSARAAFVGIAGYARTQRNDGYVLFVCDEAAQLAAKLQWRELIFARQKLVVIAELKGIDPKDRITPILAALEGQQRFGDLWVEHPDSDAGKPLASLARSFGNALRPALRKAGLLTDKPQPRQPRLHICFLDGDHALLAVADSADSAPWPLGIPRLKLLPEAPSRSALKLDEALLTLLTPEEREALVKPGMRAADLGAAPGGWTWVLTRQHVHVTSVDNGPLRAHVLETGLVEHLRADGFHWKPAQPVDWMVCDMVEQPRRVAERMATWVREGWCRNTIFNLKLPMKKRWDETRLCLELFEQQAEKSLIVRAKQLYHDREEITVLAMRG.

S-adenosyl-L-methionine is bound by residues Ser184, Ala217–Gly220, Asp236, Asp256, and Asp272. Lys301 serves as the catalytic Proton acceptor.

The protein belongs to the class I-like SAM-binding methyltransferase superfamily. RNA methyltransferase RlmE family. RlmM subfamily. As to quaternary structure, monomer.

Its subcellular location is the cytoplasm. The catalysed reaction is cytidine(2498) in 23S rRNA + S-adenosyl-L-methionine = 2'-O-methylcytidine(2498) in 23S rRNA + S-adenosyl-L-homocysteine + H(+). Its function is as follows. Catalyzes the 2'-O-methylation at nucleotide C2498 in 23S rRNA. The protein is Ribosomal RNA large subunit methyltransferase M of Xanthomonas oryzae pv. oryzae (strain PXO99A).